The primary structure comprises 480 residues: Lysosomal protective protein (480 aa).

A signal peptide spans 1–28; it reads MIRAAPPPLFLLLLLLLLLVSWASRGEA. Intrachain disulfides connect Cys88/Cys362, Cys240/Cys256, Cys241/Cys246, and Cys281/Cys331. A glycan (N-linked (GlcNAc...) asparagine) is linked at Asn145. The active site involves Ser178. An N-linked (GlcNAc...) asparagine glycan is attached at Asn333. Active-site residues include Asp400 and His457.

Belongs to the peptidase S10 family. As to quaternary structure, heterodimer of a 32 kDa chain and a 20 kDa chain; disulfide-linked.

It localises to the lysosome. It catalyses the reaction Release of a C-terminal amino acid with broad specificity.. Functionally, protective protein appears to be essential for both the activity of beta-galactosidase and neuraminidase, it associates with these enzymes and exerts a protective function necessary for their stability and activity. This protein is also a carboxypeptidase and can deamidate tachykinins. The chain is Lysosomal protective protein (CTSA) from Homo sapiens (Human).